The following is a 721-amino-acid chain: Polyribonucleotide nucleotidyltransferase (721 aa).

Positions 495 and 501 each coordinate Mg(2+). The KH domain occupies proline 562–isoleucine 621. Residues glycine 631–arginine 699 enclose the S1 motif domain. The tract at residues valine 701 to asparagine 721 is disordered. The span at glutamate 711–asparagine 721 shows a compositional bias: pro residues.

This sequence belongs to the polyribonucleotide nucleotidyltransferase family. The cofactor is Mg(2+).

The protein resides in the cytoplasm. It catalyses the reaction RNA(n+1) + phosphate = RNA(n) + a ribonucleoside 5'-diphosphate. Its function is as follows. Involved in mRNA degradation. Catalyzes the phosphorolysis of single-stranded polyribonucleotides processively in the 3'- to 5'-direction. The protein is Polyribonucleotide nucleotidyltransferase of Prochlorococcus marinus (strain MIT 9215).